The sequence spans 145 residues: Basic phospholipase A2 PC14 (145 aa).

Positions 1 to 21 are cleaved as a signal peptide; that stretch reads MYPAHLLLLLAVCVSLLGASA. Positions 22 to 27 are excised as a propeptide; sequence IPPLPL. Intrachain disulfides connect Cys38–Cys98, Cys54–Cys144, Cys56–Cys72, Cys71–Cys125, Cys78–Cys118, Cys87–Cys111, and Cys105–Cys116. Ca(2+) is bound by residues Tyr55, Gly57, and Gly59. His75 is a catalytic residue. A Ca(2+)-binding site is contributed by Asp76. Asp119 is an active-site residue.

Belongs to the phospholipase A2 family. Group I subfamily. D49 sub-subfamily. Ca(2+) is required as a cofactor.

It localises to the secreted. It carries out the reaction a 1,2-diacyl-sn-glycero-3-phosphocholine + H2O = a 1-acyl-sn-glycero-3-phosphocholine + a fatty acid + H(+). Its function is as follows. PLA2 catalyzes the calcium-dependent hydrolysis of the 2-acyl groups in 3-sn-phosphoglycerides. The sequence is that of Basic phospholipase A2 PC14 from Laticauda laticaudata (Blue-ringed sea krait).